Consider the following 291-residue polypeptide: Acetyl-coenzyme A carboxylase carboxyl transferase subunit beta (291 aa).

The interval 1 to 23 is disordered; it reads MSWLSKLMPSGIRTDNTPSKKRS. The 264-residue stretch at 28–291 folds into the CoA carboxyltransferase N-terminal domain; sequence LWEKCSNCGS…LGRQPAPEVA (264 aa). The Zn(2+) site is built by Cys32, Cys35, Cys51, and Cys54. The C4-type zinc finger occupies 32–54; that stretch reads CSNCGSALYRPELEENLEVCPKC.

This sequence belongs to the AccD/PCCB family. In terms of assembly, acetyl-CoA carboxylase is a heterohexamer composed of biotin carboxyl carrier protein (AccB), biotin carboxylase (AccC) and two subunits each of ACCase subunit alpha (AccA) and ACCase subunit beta (AccD). Zn(2+) serves as cofactor.

The protein resides in the cytoplasm. The catalysed reaction is N(6)-carboxybiotinyl-L-lysyl-[protein] + acetyl-CoA = N(6)-biotinyl-L-lysyl-[protein] + malonyl-CoA. Its pathway is lipid metabolism; malonyl-CoA biosynthesis; malonyl-CoA from acetyl-CoA: step 1/1. Component of the acetyl coenzyme A carboxylase (ACC) complex. Biotin carboxylase (BC) catalyzes the carboxylation of biotin on its carrier protein (BCCP) and then the CO(2) group is transferred by the transcarboxylase to acetyl-CoA to form malonyl-CoA. This is Acetyl-coenzyme A carboxylase carboxyl transferase subunit beta from Stenotrophomonas maltophilia (strain R551-3).